The following is a 436-amino-acid chain: Methylenetetrahydrofolate--tRNA-(uracil-5-)-methyltransferase TrmFO (436 aa).

G9–G14 serves as a coordination point for FAD.

This sequence belongs to the MnmG family. TrmFO subfamily. Requires FAD as cofactor.

It localises to the cytoplasm. The catalysed reaction is uridine(54) in tRNA + (6R)-5,10-methylene-5,6,7,8-tetrahydrofolate + NADH + H(+) = 5-methyluridine(54) in tRNA + (6S)-5,6,7,8-tetrahydrofolate + NAD(+). It catalyses the reaction uridine(54) in tRNA + (6R)-5,10-methylene-5,6,7,8-tetrahydrofolate + NADPH + H(+) = 5-methyluridine(54) in tRNA + (6S)-5,6,7,8-tetrahydrofolate + NADP(+). In terms of biological role, catalyzes the folate-dependent formation of 5-methyl-uridine at position 54 (M-5-U54) in all tRNAs. The sequence is that of Methylenetetrahydrofolate--tRNA-(uracil-5-)-methyltransferase TrmFO from Ligilactobacillus salivarius (strain UCC118) (Lactobacillus salivarius).